The chain runs to 268 residues: Energy-coupling factor transporter transmembrane protein EcfT (268 aa).

A run of 5 helical transmembrane segments spans residues 26-46 (IVTF…TYAW), 72-92 (IFWL…GTPI), 106-126 (ILNA…STIL), 149-169 (IGVP…FVPL), and 247-267 (VAFA…TWLH).

The protein belongs to the energy-coupling factor EcfT family. In terms of assembly, forms a stable energy-coupling factor (ECF) transporter complex composed of 2 membrane-embedded substrate-binding proteins (S component), 2 ATP-binding proteins (A component) and 2 transmembrane proteins (T component). May be able to interact with more than 1 S component at a time.

It is found in the cell membrane. Functionally, transmembrane (T) component of an energy-coupling factor (ECF) ABC-transporter complex. Unlike classic ABC transporters this ECF transporter provides the energy necessary to transport a number of different substrates. This Leuconostoc gelidum subsp. gasicomitatum (strain DSM 15947 / CCUG 46042 / CECT 5767 / JCM 12535 / LMG 18811 / NBRC 113245 / TB1-10) (Leuconostoc gasicomitatum) protein is Energy-coupling factor transporter transmembrane protein EcfT.